Reading from the N-terminus, the 373-residue chain is 3 beta-hydroxysteroid dehydrogenase/Delta 5--&gt;4-isomerase type 1 (373 aa).

Residues 10 to 15 (GAGGFL), Tyr155, and Lys159 each bind NADP(+). The Proton donor role is filled by Lys159. A helical transmembrane segment spans residues 288 to 308 (LSLMYWIGFLLEIVSFLLRPI).

This sequence belongs to the 3-beta-HSD family. In terms of tissue distribution, placenta and skin. Predominantly expressed in mammary gland tissue.

Its subcellular location is the endoplasmic reticulum membrane. It is found in the mitochondrion membrane. It catalyses the reaction a 3beta-hydroxy-Delta(5)-steroid + NAD(+) = a 3-oxo-Delta(5)-steroid + NADH + H(+). It carries out the reaction pregnenolone + NAD(+) = pregn-5-ene-3,20-dione + NADH + H(+). The catalysed reaction is 3beta-hydroxyandrost-5-en-17-one + NAD(+) = androst-5-ene-3,17-dione + NADH + H(+). The enzyme catalyses androst-5-en-3beta,17beta-diol + NAD(+) = 17beta-hydroxy-androst-5-en-3-one + NADH + H(+). It catalyses the reaction a 3beta-hydroxysteroid + NADP(+) = a 3-oxosteroid + NADPH + H(+). It carries out the reaction 5alpha-androstane-3beta,17beta-diol + NADP(+) = 17beta-hydroxy-5alpha-androstan-3-one + NADPH + H(+). The catalysed reaction is 3beta-hydroxy-5alpha-androstan-17-one + NADP(+) = 5alpha-androstan-3,17-dione + NADPH + H(+). The enzyme catalyses a 3-oxo-Delta(5)-steroid = a 3-oxo-Delta(4)-steroid. It catalyses the reaction pregn-5-ene-3,20-dione = progesterone. It carries out the reaction androst-5-ene-3,17-dione = androst-4-ene-3,17-dione. The catalysed reaction is 17beta-hydroxy-androst-5-en-3-one = testosterone. The enzyme catalyses 5alpha-androstane-3beta,17beta-diol + NAD(+) = 17beta-hydroxy-5alpha-androstan-3-one + NADH + H(+). It participates in steroid hormone biosynthesis. The protein operates within steroid metabolism. Functionally, a bifunctional enzyme responsible for the oxidation and isomerization of 3beta-hydroxy-Delta(5)-steroid precursors to 3-oxo-Delta(4)-steroids, an essential step in steroid hormone biosynthesis. Specifically catalyzes the conversion of pregnenolone to progesterone, 17alpha-hydroxypregnenolone to 17alpha-hydroxyprogesterone, dehydroepiandrosterone (DHEA) to 4-androstenedione, and androstenediol to testosterone. Additionally, catalyzes the interconversion between 3beta-hydroxy and 3-oxo-5alpha-androstane steroids controlling the bioavalability of the active forms. Specifically converts dihydrotestosterone to its inactive form 5alpha-androstanediol, that does not bind androgen receptor/AR. Also converts androstanedione, a precursor of testosterone and estrone, to epiandrosterone. Expected to use NAD(+) as preferred electron donor for the 3beta-hydroxy-steroid dehydrogenase activity and NADPH for the 3-ketosteroid reductase activity. The polypeptide is 3 beta-hydroxysteroid dehydrogenase/Delta 5--&gt;4-isomerase type 1 (Homo sapiens (Human)).